Here is a 555-residue protein sequence, read N- to C-terminus: Formate--tetrahydrofolate ligase (555 aa).

Residue T65 to S72 participates in ATP binding.

This sequence belongs to the formate--tetrahydrofolate ligase family.

The catalysed reaction is (6S)-5,6,7,8-tetrahydrofolate + formate + ATP = (6R)-10-formyltetrahydrofolate + ADP + phosphate. It participates in one-carbon metabolism; tetrahydrofolate interconversion. The protein is Formate--tetrahydrofolate ligase of Staphylococcus aureus (strain Mu3 / ATCC 700698).